A 391-amino-acid polypeptide reads, in one-letter code: tRNA (cytosine(38)-C(5))-methyltransferase (391 aa).

One can recognise an SAM-dependent MTase C5-type domain in the interval 4-391 (LRALELYSGI…VAKLIKILCD (388 aa)). S-adenosyl-L-methionine is bound by residues 13–15 (IGG), Asp34, 57–58 (IE), and Ser76. The active site involves Cys79. Ser376 provides a ligand contact to S-adenosyl-L-methionine.

Belongs to the class I-like SAM-binding methyltransferase superfamily. C5-methyltransferase family.

The protein resides in the cytoplasm. It carries out the reaction cytidine(38) in tRNA + S-adenosyl-L-methionine = 5-methylcytidine(38) in tRNA + S-adenosyl-L-homocysteine + H(+). In terms of biological role, specifically methylates cytosine 38 in the anticodon loop of tRNA(Asp). Has higher activity on tRNA(Asp) modified with queuosine at position 34. This is tRNA (cytosine(38)-C(5))-methyltransferase (TRDMT1) from Bos taurus (Bovine).